Consider the following 1047-residue polypeptide: FACT complex subunit SPT16 (1047 aa).

Position 2 is an N-acetylalanine (A2). Residue K139 is modified to N6-acetyllysine. The residue at position 188 (S188) is a Phosphoserine. Residues K196 and K223 each carry the N6-acetyllysine modification. A Phosphoserine modification is found at S455. A coiled-coil region spans residues 465-507 (RNEMTAEEKRRAHQKELAAQLNEEAKRRLTEQKGEQQIQKARK). Residues 491–518 (RRLTEQKGEQQIQKARKSNVSYKNPSLM) form a disordered region. Residue K497 forms a Glycyl lysine isopeptide (Lys-Gly) (interchain with G-Cter in SUMO2) linkage. Polar residues predominate over residues 499–514 (EQQIQKARKSNVSYKN). Residue S508 is modified to Phosphoserine. K513 is modified (N6-acetyllysine; alternate). K513 participates in a covalent cross-link: Glycyl lysine isopeptide (Lys-Gly) (interchain with G-Cter in SUMO2); alternate. K647 participates in a covalent cross-link: Glycyl lysine isopeptide (Lys-Gly) (interchain with G-Cter in SUMO2). Phosphoserine occurs at positions 650 and 658. Residues K732 and K786 each carry the N6-acetyllysine modification. Residue T903 is modified to Phosphothreonine. Position 904 is an N6-acetyllysine (K904). The segment at 918–1047 (EQGGWSFLEP…SSAPPKKKRK (130 aa)) is disordered. Acidic residues predominate over residues 927–973 (PEGEGSDAEDGDSESEIEDETFNPSEDDYEEEEEDSDEDYSSEAEES). Phosphoserine occurs at positions 979, 982, 986, and 1015. Positions 985–1005 (ESGKDWDELEEEARKADRESR) are enriched in basic and acidic residues. Low complexity predominate over residues 1024 to 1039 (VHSSGRGSNRGSRHSS).

It belongs to the peptidase M24 family. SPT16 subfamily. Interacts with MYOG (via C-terminal region). Component of the FACT complex, a stable heterodimer of SSRP1 and SUPT16H. Also a component of a CK2-SPT16-SSRP1 complex which forms following UV irradiation, composed of SSRP1, SUPT16H, CSNK2A1, CSNK2A2 and CSNK2B. Interacts with NEK9. Binds to histone H2A-H2B. Identified in a centromere complex containing histones H2A, H2B and H4, and at least CENPA, CENPB, CENPC, CENPT, CENPN, HJURP, SUPT16H, SSRP1 and RSF1. Interacts with GTF2E2. ADP-ribosylated. ADP-ribosylation by PARP1 is induced by genotoxic stress and correlates with dissociation of FACT from chromatin. In terms of tissue distribution, widely expressed. Expressed in brain, liver, heart, kidneys, lungs, spleen, thymus, ovary, and testes, with highest levels of expression observed in thymus.

It localises to the nucleus. The protein localises to the chromosome. Component of the FACT complex, a general chromatin factor that acts to reorganize nucleosomes. The FACT complex is involved in multiple processes that require DNA as a template such as mRNA elongation, DNA replication and DNA repair. During transcription elongation the FACT complex acts as a histone chaperone that both destabilizes and restores nucleosomal structure. It facilitates the passage of RNA polymerase II and transcription by promoting the dissociation of one histone H2A-H2B dimer from the nucleosome, then subsequently promotes the reestablishment of the nucleosome following the passage of RNA polymerase II. The FACT complex is probably also involved in phosphorylation of 'Ser-392' of p53/TP53 via its association with CK2 (casein kinase II). The protein is FACT complex subunit SPT16 (Supt16h) of Mus musculus (Mouse).